A 375-amino-acid polypeptide reads, in one-letter code: MSTAGKVIKCKAAVLWQLNKPFSIEEVEVAPPKAHEVRIKMVATGICRSDDHAVTGSIAVPLPVILGHEAAGIVESIGEGVTTVKPGDKVIPLFTPQCGKCRICKHPESNFCLINDLGKPKGMLLDGTSRFTCKGKPIHHFIGTSTFSQYTVVDEIAVAKIDAAAPLEKVCLIGCGFSTGYGSAVKVAKVTPGSTCAVFGLGGVGLSVIMGCKAAGASRIIAVDINKDKFPKAKEVGATECINPQDYKKPIQEVIQEISDGGVDFSFEVIGRLDTVVAALLSCHGACGTSVIVGVPPDSQSLTVNPMLLLSGRTWKGAIFGGFKSKDSVPKLVADFMAKKFSLDPLITNVLPFEKINEGFDLLRSGKSIRTILTF.

Position 2 is an N-acetylserine (S2). Zn(2+) contacts are provided by C47, H68, C98, C101, C104, C112, and C175. NAD(+)-binding positions include 200–205 (GLGGVG), D224, and K229. Position 234 is an N6-succinyllysine (K234). Residue 293-295 (VGV) coordinates NAD(+). Position 340 is an N6-succinyllysine (K340). R370 contacts NAD(+).

This sequence belongs to the zinc-containing alcohol dehydrogenase family. As to quaternary structure, homodimer. Zn(2+) is required as a cofactor.

It is found in the cytoplasm. The catalysed reaction is a primary alcohol + NAD(+) = an aldehyde + NADH + H(+). It carries out the reaction a secondary alcohol + NAD(+) = a ketone + NADH + H(+). In Oryctolagus cuniculus (Rabbit), this protein is Alcohol dehydrogenase 1 (ADH1).